Here is a 383-residue protein sequence, read N- to C-terminus: Succinyl-diaminopimelate desuccinylase (383 aa).

His-73 contributes to the Zn(2+) binding site. Asp-75 is an active-site residue. Asp-107 contacts Zn(2+). Glu-141 functions as the Proton acceptor in the catalytic mechanism. 3 residues coordinate Zn(2+): Glu-142, Glu-170, and His-356.

The protein belongs to the peptidase M20A family. DapE subfamily. In terms of assembly, homodimer. Zn(2+) serves as cofactor. The cofactor is Co(2+).

The catalysed reaction is N-succinyl-(2S,6S)-2,6-diaminopimelate + H2O = (2S,6S)-2,6-diaminopimelate + succinate. Its pathway is amino-acid biosynthesis; L-lysine biosynthesis via DAP pathway; LL-2,6-diaminopimelate from (S)-tetrahydrodipicolinate (succinylase route): step 3/3. Its function is as follows. Catalyzes the hydrolysis of N-succinyl-L,L-diaminopimelic acid (SDAP), forming succinate and LL-2,6-diaminopimelate (DAP), an intermediate involved in the bacterial biosynthesis of lysine and meso-diaminopimelic acid, an essential component of bacterial cell walls. The chain is Succinyl-diaminopimelate desuccinylase from Pseudomonas aeruginosa (strain ATCC 15692 / DSM 22644 / CIP 104116 / JCM 14847 / LMG 12228 / 1C / PRS 101 / PAO1).